Consider the following 86-residue polypeptide: Allergen Api g 5 (86 aa).

N-linked (GlcNAc...) asparagine glycosylation is present at asparagine 62.

Belongs to the oxygen-dependent FAD-linked oxidoreductase family. FAD is required as a cofactor. Carries MUXF and MMXF, two complex N-linked glycans with alpha-1,3-fucose and beta-1,2-xylose residues in their structures. MMXF is added to Asn-62.

In Apium graveolens (Celery), this protein is Allergen Api g 5.